A 265-amino-acid polypeptide reads, in one-letter code: Tryptophan synthase alpha chain (265 aa).

Active-site proton acceptor residues include Glu-49 and Asp-60.

This sequence belongs to the TrpA family. Tetramer of two alpha and two beta chains.

The enzyme catalyses (1S,2R)-1-C-(indol-3-yl)glycerol 3-phosphate + L-serine = D-glyceraldehyde 3-phosphate + L-tryptophan + H2O. It participates in amino-acid biosynthesis; L-tryptophan biosynthesis; L-tryptophan from chorismate: step 5/5. In terms of biological role, the alpha subunit is responsible for the aldol cleavage of indoleglycerol phosphate to indole and glyceraldehyde 3-phosphate. This chain is Tryptophan synthase alpha chain, found in Ralstonia nicotianae (strain ATCC BAA-1114 / GMI1000) (Ralstonia solanacearum).